Reading from the N-terminus, the 138-residue chain is Transcription antitermination protein NusB (138 aa).

It belongs to the NusB family.

Involved in transcription antitermination. Required for transcription of ribosomal RNA (rRNA) genes. Binds specifically to the boxA antiterminator sequence of the ribosomal RNA (rrn) operons. This chain is Transcription antitermination protein NusB, found in Helicobacter pylori (strain Shi470).